Reading from the N-terminus, the 192-residue chain is Fe/S biogenesis protein NfuA (192 aa).

[4Fe-4S] cluster-binding residues include Cys-149 and Cys-152.

This sequence belongs to the NfuA family. Homodimer. [4Fe-4S] cluster is required as a cofactor.

In terms of biological role, involved in iron-sulfur cluster biogenesis. Binds a 4Fe-4S cluster, can transfer this cluster to apoproteins, and thereby intervenes in the maturation of Fe/S proteins. Could also act as a scaffold/chaperone for damaged Fe/S proteins. The chain is Fe/S biogenesis protein NfuA from Tolumonas auensis (strain DSM 9187 / NBRC 110442 / TA 4).